The chain runs to 510 residues: Light-independent protochlorophyllide reductase subunit B (510 aa).

Residue aspartate 36 participates in [4Fe-4S] cluster binding. Aspartate 296 functions as the Proton donor in the catalytic mechanism. Position 431–432 (431–432 (GM)) interacts with substrate.

The protein belongs to the ChlB/BchB/BchZ family. As to quaternary structure, protochlorophyllide reductase is composed of three subunits; ChlL, ChlN and ChlB. Forms a heterotetramer of two ChlB and two ChlN subunits. Requires [4Fe-4S] cluster as cofactor.

It catalyses the reaction chlorophyllide a + oxidized 2[4Fe-4S]-[ferredoxin] + 2 ADP + 2 phosphate = protochlorophyllide a + reduced 2[4Fe-4S]-[ferredoxin] + 2 ATP + 2 H2O. Its pathway is porphyrin-containing compound metabolism; chlorophyll biosynthesis (light-independent). Its function is as follows. Component of the dark-operative protochlorophyllide reductase (DPOR) that uses Mg-ATP and reduced ferredoxin to reduce ring D of protochlorophyllide (Pchlide) to form chlorophyllide a (Chlide). This reaction is light-independent. The NB-protein (ChlN-ChlB) is the catalytic component of the complex. This chain is Light-independent protochlorophyllide reductase subunit B, found in Synechococcus sp. (strain JA-3-3Ab) (Cyanobacteria bacterium Yellowstone A-Prime).